Reading from the N-terminus, the 121-residue chain is Small ribosomal subunit protein uS13 (121 aa).

Positions 91–121 (HRRGLPVRGQNSKNNARTRKGPRRTVANKKK) are disordered. The segment covering 106–121 (ARTRKGPRRTVANKKK) has biased composition (basic residues).

This sequence belongs to the universal ribosomal protein uS13 family. As to quaternary structure, part of the 30S ribosomal subunit. Forms a loose heterodimer with protein S19. Forms two bridges to the 50S subunit in the 70S ribosome.

Located at the top of the head of the 30S subunit, it contacts several helices of the 16S rRNA. In the 70S ribosome it contacts the 23S rRNA (bridge B1a) and protein L5 of the 50S subunit (bridge B1b), connecting the 2 subunits; these bridges are implicated in subunit movement. Contacts the tRNAs in the A and P-sites. The polypeptide is Small ribosomal subunit protein uS13 (Bacillus cereus (strain AH187)).